Consider the following 281-residue polypeptide: UPF0294 protein VP2298 (281 aa).

The protein belongs to the UPF0294 family.

Its subcellular location is the cytoplasm. This Vibrio parahaemolyticus serotype O3:K6 (strain RIMD 2210633) protein is UPF0294 protein VP2298.